Consider the following 473-residue polypeptide: Probable dipeptidase (473 aa).

The active site involves cysteine 10.

Belongs to the peptidase C69 family.

The catalysed reaction is an L-aminoacyl-L-amino acid + H2O = 2 an L-alpha-amino acid. This chain is Probable dipeptidase, found in Latilactobacillus sakei (Lactobacillus sakei).